A 151-amino-acid polypeptide reads, in one-letter code: Odorant-binding protein (151 aa).

Disulfide bonds link cysteine 38–cysteine 42 and cysteine 57–cysteine 149.

The protein belongs to the calycin superfamily. Lipocalin family. Expressed in salivary glands, hair and urine.

The protein resides in the secreted. In terms of biological role, may act as a pheromone. This is Odorant-binding protein from Phodopus sungorus (Striped hairy-footed hamster).